A 359-amino-acid chain; its full sequence is Phosphate acyltransferase (359 aa).

The protein belongs to the PlsX family. In terms of assembly, homodimer. Probably interacts with PlsY.

It localises to the cytoplasm. The enzyme catalyses a fatty acyl-[ACP] + phosphate = an acyl phosphate + holo-[ACP]. The protein operates within lipid metabolism; phospholipid metabolism. Catalyzes the reversible formation of acyl-phosphate (acyl-PO(4)) from acyl-[acyl-carrier-protein] (acyl-ACP). This enzyme utilizes acyl-ACP as fatty acyl donor, but not acyl-CoA. The sequence is that of Phosphate acyltransferase from Salmonella heidelberg (strain SL476).